The primary structure comprises 564 residues: Quinone-dependent D-lactate dehydrogenase (564 aa).

The FAD-binding PCMH-type domain maps to G36–V207. FAD contacts are provided by residues A70–G74, G78–S79, G137, S144, G154, and V256.

It belongs to the quinone-dependent D-lactate dehydrogenase family. FAD serves as cofactor.

The protein resides in the cell inner membrane. The enzyme catalyses (R)-lactate + a quinone = a quinol + pyruvate. Its function is as follows. Catalyzes the oxidation of D-lactate to pyruvate. The polypeptide is Quinone-dependent D-lactate dehydrogenase (Haemophilus influenzae (strain ATCC 51907 / DSM 11121 / KW20 / Rd)).